The sequence spans 464 residues: Fumarate hydratase class II (464 aa).

Residues 98–100 (SGT), 129–132 (HPND), 139–141 (SSN), and threonine 187 contribute to the substrate site. The Proton donor/acceptor role is filled by histidine 188. Serine 318 is a catalytic residue. Substrate-binding positions include serine 319 and 324–326 (KVN).

This sequence belongs to the class-II fumarase/aspartase family. Fumarase subfamily. Homotetramer.

It is found in the cytoplasm. The enzyme catalyses (S)-malate = fumarate + H2O. It participates in carbohydrate metabolism; tricarboxylic acid cycle; (S)-malate from fumarate: step 1/1. In terms of biological role, involved in the TCA cycle. Catalyzes the stereospecific interconversion of fumarate to L-malate. This is Fumarate hydratase class II from Haemophilus influenzae (strain ATCC 51907 / DSM 11121 / KW20 / Rd).